A 190-amino-acid polypeptide reads, in one-letter code: Acireductone dioxygenase (190 aa).

Fe(2+) contacts are provided by histidine 101, histidine 103, glutamate 107, and histidine 145. Ni(2+) is bound by residues histidine 101, histidine 103, glutamate 107, and histidine 145.

The protein belongs to the acireductone dioxygenase (ARD) family. Monomer. It depends on Fe(2+) as a cofactor. The cofactor is Ni(2+).

The catalysed reaction is 1,2-dihydroxy-5-(methylsulfanyl)pent-1-en-3-one + O2 = 3-(methylsulfanyl)propanoate + CO + formate + 2 H(+). It catalyses the reaction 1,2-dihydroxy-5-(methylsulfanyl)pent-1-en-3-one + O2 = 4-methylsulfanyl-2-oxobutanoate + formate + 2 H(+). The protein operates within amino-acid biosynthesis; L-methionine biosynthesis via salvage pathway; L-methionine from S-methyl-5-thio-alpha-D-ribose 1-phosphate: step 5/6. In terms of biological role, catalyzes 2 different reactions between oxygen and the acireductone 1,2-dihydroxy-3-keto-5-methylthiopentene (DHK-MTPene) depending upon the metal bound in the active site. Fe-containing acireductone dioxygenase (Fe-ARD) produces formate and 2-keto-4-methylthiobutyrate (KMTB), the alpha-ketoacid precursor of methionine in the methionine recycle pathway. Ni-containing acireductone dioxygenase (Ni-ARD) produces methylthiopropionate, carbon monoxide and formate, and does not lie on the methionine recycle pathway. The sequence is that of Acireductone dioxygenase from Saccharopolyspora erythraea (strain ATCC 11635 / DSM 40517 / JCM 4748 / NBRC 13426 / NCIMB 8594 / NRRL 2338).